Reading from the N-terminus, the 38-residue chain is Large ribosomal subunit protein bL36A (38 aa).

Belongs to the bacterial ribosomal protein bL36 family.

This is Large ribosomal subunit protein bL36A from Pectobacterium atrosepticum (strain SCRI 1043 / ATCC BAA-672) (Erwinia carotovora subsp. atroseptica).